Here is a 130-residue protein sequence, read N- to C-terminus: D-ribose pyranase (130 aa).

Residue His-20 is the Proton donor of the active site. Residues Asp-28, His-97, and Tyr-119 to Asn-121 contribute to the substrate site.

The protein belongs to the RbsD / FucU family. RbsD subfamily. As to quaternary structure, homodecamer.

The protein localises to the cytoplasm. The enzyme catalyses beta-D-ribopyranose = beta-D-ribofuranose. The protein operates within carbohydrate metabolism; D-ribose degradation; D-ribose 5-phosphate from beta-D-ribopyranose: step 1/2. In terms of biological role, catalyzes the interconversion of beta-pyran and beta-furan forms of D-ribose. In Bacillus pumilus (strain SAFR-032), this protein is D-ribose pyranase.